A 361-amino-acid polypeptide reads, in one-letter code: Chorismate synthase (361 aa).

Residues Arg48 and Arg54 each coordinate NADP(+). FMN-binding positions include 125 to 127 (RSS), 238 to 239 (NA), Gly278, 293 to 297 (KPTSS), and Arg319.

This sequence belongs to the chorismate synthase family. As to quaternary structure, homotetramer. FMNH2 is required as a cofactor.

It carries out the reaction 5-O-(1-carboxyvinyl)-3-phosphoshikimate = chorismate + phosphate. It participates in metabolic intermediate biosynthesis; chorismate biosynthesis; chorismate from D-erythrose 4-phosphate and phosphoenolpyruvate: step 7/7. Functionally, catalyzes the anti-1,4-elimination of the C-3 phosphate and the C-6 proR hydrogen from 5-enolpyruvylshikimate-3-phosphate (EPSP) to yield chorismate, which is the branch point compound that serves as the starting substrate for the three terminal pathways of aromatic amino acid biosynthesis. This reaction introduces a second double bond into the aromatic ring system. This chain is Chorismate synthase, found in Pectobacterium carotovorum subsp. carotovorum (strain PC1).